The following is a 493-amino-acid chain: Glutamate--tRNA ligase (493 aa).

The short motif at 9–19 (PSPTGDPHVGT) is the 'HIGH' region element. A 'KMSKS' region motif is present at residues 249–253 (KLSKR). Position 252 (K252) interacts with ATP.

The protein belongs to the class-I aminoacyl-tRNA synthetase family. Glutamate--tRNA ligase type 1 subfamily. Monomer.

It is found in the cytoplasm. It carries out the reaction tRNA(Glu) + L-glutamate + ATP = L-glutamyl-tRNA(Glu) + AMP + diphosphate. Functionally, catalyzes the attachment of glutamate to tRNA(Glu) in a two-step reaction: glutamate is first activated by ATP to form Glu-AMP and then transferred to the acceptor end of tRNA(Glu). This is Glutamate--tRNA ligase from Marinobacter nauticus (strain ATCC 700491 / DSM 11845 / VT8) (Marinobacter aquaeolei).